The following is a 691-amino-acid chain: DNA-directed RNA polymerase subunit beta' (691 aa).

Zn(2+) contacts are provided by Cys-69, Cys-71, Cys-87, and Cys-90. Mg(2+) is bound by residues Asp-489, Asp-491, and Asp-493.

It belongs to the RNA polymerase beta' chain family. RpoC1 subfamily. In plastids the minimal PEP RNA polymerase catalytic core is composed of four subunits: alpha, beta, beta', and beta''. When a (nuclear-encoded) sigma factor is associated with the core the holoenzyme is formed, which can initiate transcription. Mg(2+) is required as a cofactor. The cofactor is Zn(2+).

It is found in the plastid. The protein resides in the chloroplast. It catalyses the reaction RNA(n) + a ribonucleoside 5'-triphosphate = RNA(n+1) + diphosphate. Its function is as follows. DNA-dependent RNA polymerase catalyzes the transcription of DNA into RNA using the four ribonucleoside triphosphates as substrates. The sequence is that of DNA-directed RNA polymerase subunit beta' from Jasminum nudiflorum (Winter jasmine).